Consider the following 229-residue polypeptide: CMRF35-like molecule 6 (229 aa).

The N-terminal stretch at 1-21 (MNPRVIRLWLPSAVLLSLVPG) is a signal peptide. The Ig-like V-type domain maps to 22–126 (HFPVRGPSTV…FYDAYLQIDK (105 aa)). Over 22 to 188 (HFPVRGPSTV…ELRSLLSSPH (167 aa)) the chain is Extracellular. A disulfide bridge links Cys43 with Cys110. N-linked (GlcNAc...) asparagine glycans are attached at residues Asn90 and Asn99. Residues 189–209 (FWILVSLKLPLFLSMLGALLW) traverse the membrane as a helical segment. Topologically, residues 210 to 229 (VNRPQRCSGGSSAWPCYENQ) are cytoplasmic.

The protein belongs to the CD300 family.

The protein resides in the cell membrane. This chain is CMRF35-like molecule 6 (Cd300c), found in Mus musculus (Mouse).